The primary structure comprises 517 residues: MADADEGFGLARTPLEPDSKDRSCDSKPESALGAPSKSPSSPQAAFTQQGMEGIKVFLHERELWLKFHEVGTEMIITKAGRQMFPSYKVKVTGLNPKTKYILLMDIVPADDHRYKFADNKWSVTGKAEPAMPGRLYVHPDSPATGAHWMRQLVSFQKLKLTNNHLDPFGHIILNSMHKYQPRLHIVKADENNGFGSKNTAFCTHVFPETAFIAVTSYQNHKITQLKIENNPFAKGFRGSDDLELHRMSRMRSKEYPVVPRSTVRHKVANHSPFSSETRALSTSSNLGSQYQCENGVSGPSQDLLPPPNPYPLAQEHSQIYHCTKRKDEECSSTEHPYKKPYMETSPSEEDTFYRSGYPQQQGLSTSYRTESAQRQACMYASSAPPSEPVPSLEDISCNTWPSMPSYSSCTVTTVQPMDRLPYQHFSAHFTSGPLVPRLAGMANHGSPQLGEGMFQHQTSVTHQPVVRQCGPQTGLQSPGSLQPPEFLYTHGVPRTLSPHQYHSVHGVGMVPEWSENS.

The interval 1 to 46 (MADADEGFGLARTPLEPDSKDRSCDSKPESALGAPSKSPSSPQAAF) is disordered. Over residues 15–28 (LEPDSKDRSCDSKP) the composition is skewed to basic and acidic residues. Positions 34–45 (APSKSPSSPQAA) are enriched in low complexity. The segment at residues 58-238 (LHERELWLKF…NNPFAKGFRG (181 aa)) is a DNA-binding region (T-box). Disordered regions lie at residues 270–313 (HSPF…YPLA) and 331–369 (SSTEHPYKKPYMETSPSEEDTFYRSGYPQQQGLSTSYRT). Residues 271–300 (SPFSSETRALSTSSNLGSQYQCENGVSGPS) show a composition bias toward polar residues. The residue at position 338 (lysine 338) is an N6-acetyllysine. Polar residues predominate over residues 357 to 369 (YPQQQGLSTSYRT).

In terms of assembly, monomer. Homodimer (via the T-box); binds DNA as homodimer. Interacts (via the T-box) with NKX2-5 (via the homeobox); this complex binds DNA. Interacts with GATA4. Interacts with KAT2A and KAT2B. Post-translationally, acetylation at Lys-338 by KAT2A and KAT2B promotes nuclear retention.

It is found in the nucleus. Its subcellular location is the cytoplasm. DNA-binding protein that regulates the transcription of several genes and is involved in heart development and limb pattern formation. Binds to the core DNA motif of NPPA promoter. The polypeptide is T-box transcription factor TBX5 (Tbx5) (Rattus norvegicus (Rat)).